The chain runs to 569 residues: Urease subunit alpha (569 aa).

The region spanning 131 to 569 (GSIDTHIHFI…VPMAQKYFLL (439 aa)) is the Urease domain. Positions 136, 138, and 219 each coordinate Ni(2+). Position 219 is an N6-carboxylysine (Lys-219). Residue His-221 participates in substrate binding. Ni(2+) is bound by residues His-248 and His-274. The active-site Proton donor is the His-322. Asp-362 contacts Ni(2+).

The protein belongs to the metallo-dependent hydrolases superfamily. Urease alpha subunit family. Heterotrimer of UreA (gamma), UreB (beta) and UreC (alpha) subunits. Two heterotrimers associate to form the active enzyme. In most bacteria it is thought that three heterotrimers form the active enzyme. The cofactor is Ni cation. Carboxylation allows a single lysine to coordinate two nickel ions.

It is found in the cytoplasm. The enzyme catalyses urea + 2 H2O + H(+) = hydrogencarbonate + 2 NH4(+). It functions in the pathway nitrogen metabolism; urea degradation; CO(2) and NH(3) from urea (urease route): step 1/1. Its activity is regulated as follows. Inhibited by HgCl2 and acetohydroxyamic acid slightly by EDTA, but not by boric acid or L-methionine-DL-sulfoximine. The polypeptide is Urease subunit alpha (Prochlorococcus marinus subsp. pastoris (strain PCC 9511)).